The sequence spans 71 residues: 26S proteasome complex subunit rpn15 (71 aa).

The tract at residues 1–38 is disordered; the sequence is MSRAALPSLENLEDDDEFEDFATENWPMKDTELDTGDD. The segment covering 11 to 22 has biased composition (acidic residues); the sequence is NLEDDDEFEDFA. The tract at residues 16-25 is UBS-II; it reads DEFEDFATEN. A UBS-I region spans residues 38–49; sequence DTLWENNWDDED.

This sequence belongs to the DSS1/SEM1 family. In terms of assembly, interacts with mlo3, rae1, nup98/nup189 and nup146. Interacts with rad24. Interacts (via UBSs) with ubiquitin (ubi3/ubi5).

The protein localises to the cytoplasm. It localises to the nucleus. In terms of biological role, versatile protein that might stabilize multiple protein complexes involved in diverse pathways. Subunit of the 26S proteasome which plays a role in ubiquitin-dependent proteolysis. Acts as a ubiquitin receptor of the 26S proteasome, by interacting with ubiquitin chains linked by 'Lys-63' and 'Lys-48'. Involved in nuclear export of specific sets of mRNAs. Links the mRNA adapter mlo3 to rae1 for targeting mRNA-protein complex to the proteins of the nucleoporin complex (NPC). Involved in recombinational repair of DNA. Plays a critical role in linking repair and checkpoint factors to damaged DNA sites by specifically recruiting rad24 and cdc25 to the DSBs. In Schizosaccharomyces pombe (strain 972 / ATCC 24843) (Fission yeast), this protein is 26S proteasome complex subunit rpn15 (rpn15).